The sequence spans 279 residues: Lysozyme-like protein 2 (279 aa).

A signal peptide spans 1 to 19; it reads MIKLLVSFTILFVLSSARP. Residues 47–265 enclose the Ch-type lysozyme domain; the sequence is MGNAVDFSFP…AAAPKTEVNM (219 aa).

This sequence belongs to the glycosyl hydrolase 25 family. As to expression, expressed in intestine.

Functionally, involved in resistance to Gram-positive bacteria P.aeruginosa or B.thuringiensis infection. The sequence is that of Lysozyme-like protein 2 from Caenorhabditis elegans.